The following is a 515-amino-acid chain: Histidine ammonia-lyase (515 aa).

The segment at residues 145–147 (ASG) is a cross-link (5-imidazolinone (Ala-Gly)). Ser-146 carries the 2,3-didehydroalanine (Ser) modification.

Belongs to the PAL/histidase family. In terms of processing, contains an active site 4-methylidene-imidazol-5-one (MIO), which is formed autocatalytically by cyclization and dehydration of residues Ala-Ser-Gly.

The protein resides in the cytoplasm. It catalyses the reaction L-histidine = trans-urocanate + NH4(+). It functions in the pathway amino-acid degradation; L-histidine degradation into L-glutamate; N-formimidoyl-L-glutamate from L-histidine: step 1/3. This is Histidine ammonia-lyase from Gluconobacter oxydans (strain 621H) (Gluconobacter suboxydans).